The chain runs to 79 residues: Putative membrane protein insertion efficiency factor (79 aa).

This sequence belongs to the UPF0161 family.

It is found in the cell inner membrane. Could be involved in insertion of integral membrane proteins into the membrane. This chain is Putative membrane protein insertion efficiency factor, found in Bacteroides thetaiotaomicron (strain ATCC 29148 / DSM 2079 / JCM 5827 / CCUG 10774 / NCTC 10582 / VPI-5482 / E50).